Consider the following 178-residue polypeptide: Putative adenylate kinase (178 aa).

ATP is bound by residues Gly10, Gly12, Lys13, Ser14, and Ser15. The tract at residues 29-50 is NMP; sequence TVVELAEKHGCIIDEEDGEIVI. An LID region spans residues 94-104; sequence GRNWSEEKLLE. Arg95 lines the ATP pocket.

Belongs to the adenylate kinase family. AK6 subfamily. As to quaternary structure, interacts with uS11. Not a structural component of 40S pre-ribosomes, but transiently interacts with them by binding to uS11.

It carries out the reaction AMP + ATP = 2 ADP. The catalysed reaction is ATP + H2O = ADP + phosphate + H(+). Functionally, broad-specificity nucleoside monophosphate (NMP) kinase that catalyzes the reversible transfer of the terminal phosphate group between nucleoside triphosphates and monophosphates. Also has ATPase activity. Involved in the late maturation steps of the 30S ribosomal particles, specifically 16S rRNA maturation. While NMP activity is not required for ribosome maturation, ATPase activity is. Associates transiently with small ribosomal subunit protein uS11. ATP hydrolysis breaks the interaction with uS11. May temporarily remove uS11 from the ribosome to enable a conformational change of the ribosomal RNA that is needed for the final maturation step of the small ribosomal subunit. The sequence is that of Putative adenylate kinase from Archaeoglobus fulgidus (strain ATCC 49558 / DSM 4304 / JCM 9628 / NBRC 100126 / VC-16).